Consider the following 554-residue polypeptide: HMG box-containing protein 4 (554 aa).

Disordered stretches follow at residues 15 to 368 (GTED…AYQV) and 417 to 469 (HKQN…PAKV). Basic and acidic residues predominate over residues 75 to 88 (SSDDYHADHSTDSA). Over residues 95–105 (SLPSPSSSDTA) the composition is skewed to low complexity. Residues 113 to 123 (TSPQADTSTTH) are compositionally biased toward polar residues. Basic and acidic residues-rich tracts occupy residues 145–154 (PHKDYHKKSG) and 217–226 (LGREEIESRS). Residues 236–251 (YTPRSGGTPDSASSTG) show a composition bias toward polar residues. A compositionally biased stretch (basic residues) spans 268-296 (MKKKKKSKKSKKKKDKHKDEKHKKHSKSK). The span at 313 to 332 (LPSPPPPPATTPPTSPPSIP) shows a compositional bias: pro residues. Residues 341 to 357 (HTEEQSDKKKKKEDPEK) show a composition bias toward basic and acidic residues. Residues 359-427 (KKKNMSAYQV…KQNKAEATTV (69 aa)) constitute a DNA-binding region (HMG box). Composition is skewed to low complexity over residues 433–445 (SSES…GSSS) and 454–467 (SPTS…TSPA).

In terms of assembly, interacts with nlk.2.

The protein localises to the nucleus. In terms of biological role, negatively regulates Wnt/beta-catenin signaling during development. The protein is HMG box-containing protein 4 (hmgxb4) of Xenopus laevis (African clawed frog).